Reading from the N-terminus, the 318-residue chain is Putative fimbrium tip subunit Fim1F (318 aa).

The N-terminal stretch at Met1–Glu24 is a signal peptide. A propeptide spanning residues Val25–Lys50 is cleaved from the precursor.

It belongs to the bacteroidetes fimbrillin superfamily. FimA/Mfa1 family. As to quaternary structure, may be part of the fimbrial tip.

The protein localises to the fimbrium. Its function is as follows. Putative component of the fimbrium tip. Fimbriae are filamentous appendages on the cell surface that mediate cell adhesion and biofilm formation. The polypeptide is Putative fimbrium tip subunit Fim1F (Parabacteroides distasonis (strain ATCC 8503 / DSM 20701 / CIP 104284 / JCM 5825 / NCTC 11152)).